A 201-amino-acid chain; its full sequence is GTP cyclohydrolase 1 (201 aa).

The Zn(2+) site is built by Cys-90, His-93, and Cys-163.

The protein belongs to the GTP cyclohydrolase I family. Homomer.

It catalyses the reaction GTP + H2O = 7,8-dihydroneopterin 3'-triphosphate + formate + H(+). It functions in the pathway cofactor biosynthesis; 7,8-dihydroneopterin triphosphate biosynthesis; 7,8-dihydroneopterin triphosphate from GTP: step 1/1. The polypeptide is GTP cyclohydrolase 1 (Streptomyces griseus subsp. griseus (strain JCM 4626 / CBS 651.72 / NBRC 13350 / KCC S-0626 / ISP 5235)).